The primary structure comprises 74 residues: MSRRLILILVLVAMLVKTMAGMESKWVETTYEIKKRSGTSEKERESERLLGVVNPLIKCFRSPCPGRRAISEQT.

The signal sequence occupies residues 1–21; it reads MSRRLILILVLVAMLVKTMAG. The propeptide occupies 22 to 33; the sequence is MESKWVETTYEI. Position 65 is a proline amide (Pro65). Positions 69-74 are excised as a propeptide; the sequence is AISEQT.

This sequence belongs to the non-disulfide-bridged peptide (NDBP) superfamily. Medium-length antimicrobial peptide (group 3) family. Expressed by the venom gland.

The protein localises to the secreted. The protein resides in the target cell membrane. In terms of biological role, possesses antimicrobial activity against both Gram-negative and Gram-positive bacteria, as well as against the fungus C.tropicalis. Also possesses a relatively high hemolytic activity. May act by disrupting the integrity of the bacterial cell membrane. The sequence is that of Antimicrobial peptide HsAp2 from Heterometrus spinifer (Asia giant forest scorpion).